Consider the following 371-residue polypeptide: DNA replication and repair protein RecF (371 aa).

30–37 (GANAQGKT) provides a ligand contact to ATP.

This sequence belongs to the RecF family.

The protein resides in the cytoplasm. The RecF protein is involved in DNA metabolism; it is required for DNA replication and normal SOS inducibility. RecF binds preferentially to single-stranded, linear DNA. It also seems to bind ATP. This chain is DNA replication and repair protein RecF, found in Lacticaseibacillus paracasei (strain ATCC 334 / BCRC 17002 / CCUG 31169 / CIP 107868 / KCTC 3260 / NRRL B-441) (Lactobacillus paracasei).